A 223-amino-acid polypeptide reads, in one-letter code: Endonuclease NucS (223 aa).

Belongs to the NucS endonuclease family.

Its subcellular location is the cytoplasm. Cleaves both 3' and 5' ssDNA extremities of branched DNA structures. The chain is Endonuclease NucS from Mycolicibacterium vanbaalenii (strain DSM 7251 / JCM 13017 / BCRC 16820 / KCTC 9966 / NRRL B-24157 / PYR-1) (Mycobacterium vanbaalenii).